We begin with the raw amino-acid sequence, 137 residues long: Small ribosomal subunit protein uS11 (137 aa).

The span at 1 to 11 shows a compositional bias: polar residues; the sequence is MPPKSRSTGPK. Disordered stretches follow at residues 1 to 28 and 117 to 137; these read MPPKSRSTGPKKTQKARRRDKKNVPHGA and TISDVTPQPHNGCRPPKRRRV. The segment covering 12 to 21 has biased composition (basic residues); the sequence is KTQKARRRDK.

The protein belongs to the universal ribosomal protein uS11 family. As to quaternary structure, part of the 30S ribosomal subunit. Interacts with proteins S7 and S18. Binds to IF-3.

Functionally, located on the platform of the 30S subunit, it bridges several disparate RNA helices of the 16S rRNA. Forms part of the Shine-Dalgarno cleft in the 70S ribosome. This chain is Small ribosomal subunit protein uS11, found in Rhodococcus opacus (strain B4).